Reading from the N-terminus, the 263-residue chain is Transmembrane protein 176B (263 aa).

4 helical membrane-spanning segments follow: residues Leu61–Phe81, Ala89–Val109, Val121–Val141, and Leu197–Val217. A phosphoserine mark is found at Ser231, Ser240, and Ser253. The segment at Glu239–Leu263 is disordered.

The protein belongs to the TMEM176 family. As to expression, ubiquitously expressed with higher expression in lung, liver, kidney and colon. Expressed in cerebellar granule cells.

The protein localises to the nucleus membrane. May play a role in the process of maturation of dendritic cells. Required for the development of cerebellar granule cells. This is Transmembrane protein 176B (Tmem176b) from Mus musculus (Mouse).